Reading from the N-terminus, the 81-residue chain is Conotoxin Im6.1 (81 aa).

A signal peptide spans 1–20 (MSKLGVVLFTLLLLVPLVTP). The propeptide occupies 21–47 (ERDGGKWTMLAKNKKAMKRNLMDFITR). 3 cysteine pairs are disulfide-bonded: cysteine 49-cysteine 61, cysteine 54-cysteine 67, and cysteine 60-cysteine 76.

Belongs to the conotoxin M superfamily. In terms of tissue distribution, expressed by the venom duct.

The protein localises to the secreted. The protein is Conotoxin Im6.1 of Conus imperialis (Imperial cone).